The sequence spans 591 residues: Chaperone protein DnaK (591 aa).

At Thr-175 the chain carries Phosphothreonine; by autocatalysis. Low complexity predominate over residues 568–577; the sequence is AQAAEFANKQ. The segment at 568–591 is disordered; sequence AQAAEFANKQNESDPNNNSSEQNN. A compositionally biased stretch (polar residues) spans 580 to 591; sequence SDPNNNSSEQNN.

It belongs to the heat shock protein 70 family.

Functionally, acts as a chaperone. In Mycoplasma mycoides subsp. mycoides SC (strain CCUG 32753 / NCTC 10114 / PG1), this protein is Chaperone protein DnaK.